We begin with the raw amino-acid sequence, 103 residues long: Urease subunit beta (103 aa).

This sequence belongs to the urease beta subunit family. In terms of assembly, heterotrimer of UreA (gamma), UreB (beta) and UreC (alpha) subunits. Three heterotrimers associate to form the active enzyme.

The protein localises to the cytoplasm. The catalysed reaction is urea + 2 H2O + H(+) = hydrogencarbonate + 2 NH4(+). The protein operates within nitrogen metabolism; urea degradation; CO(2) and NH(3) from urea (urease route): step 1/1. This chain is Urease subunit beta, found in Blochmanniella floridana.